The primary structure comprises 773 residues: MSHSKFIPTVSIQSPVHHTNIKVQSTEPSFKKEDLHLISKDSLESDSESPTQKIKSQSDLEDQIQDNDMEPDSLEEENLSETEEEASRKAAQRAKKENLHTQDAAAINSRQPTEDKYSHIRYDPNWKSKKEEGKLLPVEALPESVDSSTENLTLNPLYPSKEPSMDLSAGKGEQKSPRSTASLLGSEFVSPNYELSTHRTEPFSVLSDSDPEEKSSNLSRYLKSSSSRSEAFLPGSRGPRRRKSKQYFVEKNKLTLGLPTPRMDSYLQLHNKKRGEGHLEQISYPVRVTDKTSIQNARETGNVAIDPEDKWHQRAQQLKDYQEHWSQYEHEKSSSGPRGQSSETTNGQQPSRKPAKHKIRKQRRHRHGPKSLVTEELVVSQGNQNNTPRHQQNPNKPIDTEVTQETVVIMNATNDDLQYSSVLRSQDPTVTSNQYAPLHQISDKVLYKNPARYYPVTNANRERGHNDQEEKRFSYQQLHIDTLSDMHLNYLHELNKKHPSGSQKGSQSVSNINRQASTEKKKQPKLAYTETKYKNLEILWKFHSSSEEQPAKASPDSRLSQIMEQHQQALLQLTEVQPHEGASPGLTLPPILPRVESESQLSSERSQRNQVKISRSNSESYLFQLEKGKKHRKRSSIKSSKLKGYQNRDVKLGGLGPDLESIRDKMQKLIQQKEYAKQVKEYNMKALSIPSKPQTAITENKSAVPRQKALEYAKTIPKPKPSNLSDQASKEKKTPTHAGKEDTLPEISLLEVLQNRHEREKQAVAAFKVLHIV.

Disordered regions lie at residues M1–Y247, W325–V373, K496–L526, E596–R615, and A713–T743. Residues V10–P28 are compositionally biased toward polar residues. Basic and acidic residues predominate over residues S29–L43. The span at E48–Q57 shows a compositional bias: polar residues. Residues D59–E84 show a composition bias toward acidic residues. A compositionally biased stretch (basic and acidic residues) spans P112–K134. Polar residues predominate over residues V145–L154. Residues S216–S229 are compositionally biased toward low complexity. Polar residues predominate over residues S334 to S351. The span at K353–P369 shows a compositional bias: basic residues. The span at S500–A516 shows a compositional bias: polar residues. The segment covering E598–Q610 has biased composition (low complexity). Residues A728–T743 show a composition bias toward basic and acidic residues.

Functionally, required for the normal development of cilia in brain ependymal cells lining the ventricular surfaces. In Bos taurus (Bovine), this protein is Jhy protein homolog (JHY).